The sequence spans 65 residues: DNA-directed RNA polymerase subunit omega (65 aa).

The protein belongs to the RNA polymerase subunit omega family. As to quaternary structure, the RNAP catalytic core consists of 2 alpha, 1 beta, 1 beta' and 1 omega subunit. When a sigma factor is associated with the core the holoenzyme is formed, which can initiate transcription.

It catalyses the reaction RNA(n) + a ribonucleoside 5'-triphosphate = RNA(n+1) + diphosphate. Functionally, promotes RNA polymerase assembly. Latches the N- and C-terminal regions of the beta' subunit thereby facilitating its interaction with the beta and alpha subunits. The chain is DNA-directed RNA polymerase subunit omega from Finegoldia magna (strain ATCC 29328 / DSM 20472 / WAL 2508) (Peptostreptococcus magnus).